A 117-amino-acid polypeptide reads, in one-letter code: Ubiquitin-like protein 3 (117 aa).

Residues I10–L88 enclose the Ubiquitin-like domain. A lipid anchor (S-palmitoyl cysteine) is attached at C113. C114 carries the cysteine methyl ester modification. C114 is lipidated: S-geranylgeranyl cysteine. The propeptide at V115–L117 is removed in mature form.

The protein localises to the cell membrane. The chain is Ubiquitin-like protein 3 (Ubl3) from Mus musculus (Mouse).